The chain runs to 200 residues: 5'(3')-deoxyribonucleotidase, cytosolic type (200 aa).

The Nucleophile role is filled by aspartate 12. Residues aspartate 12 and aspartate 14 each contribute to the Mg(2+) site. Aspartate 14 functions as the Proton donor in the catalytic mechanism. Substrate is bound by residues phenylalanine 20, phenylalanine 46, tyrosine 67, and threonine 101. Threonine 102 bears the Phosphothreonine mark. Lysine 136 lines the substrate pocket. Aspartate 147 is a binding site for Mg(2+). Serine 184 bears the Phosphoserine mark.

The protein belongs to the 5'(3')-deoxyribonucleotidase family. In terms of assembly, homodimer. Mg(2+) serves as cofactor.

It is found in the cytoplasm. In terms of biological role, dephosphorylates the 5' and 2'(3')-phosphates of deoxyribonucleotides, with a preference for dUMP and dTMP, intermediate activity towards dGMP, and low activity towards dCMP and dAMP. The chain is 5'(3')-deoxyribonucleotidase, cytosolic type (Nt5c) from Mus musculus (Mouse).